The sequence spans 262 residues: Type III pantothenate kinase (262 aa).

Residue 12 to 19 (DIGNTSIA) coordinates ATP. Residues Tyr-94 and 109-112 (GSDV) contribute to the substrate site. Asp-111 acts as the Proton acceptor in catalysis. K(+) is bound at residue Asp-132. Position 135 (Thr-135) interacts with ATP. Thr-187 is a binding site for substrate.

Belongs to the type III pantothenate kinase family. In terms of assembly, homodimer. NH4(+) is required as a cofactor. Requires K(+) as cofactor.

Its subcellular location is the cytoplasm. It carries out the reaction (R)-pantothenate + ATP = (R)-4'-phosphopantothenate + ADP + H(+). It functions in the pathway cofactor biosynthesis; coenzyme A biosynthesis; CoA from (R)-pantothenate: step 1/5. Functionally, catalyzes the phosphorylation of pantothenate (Pan), the first step in CoA biosynthesis. The chain is Type III pantothenate kinase from Borrelia garinii subsp. bavariensis (strain ATCC BAA-2496 / DSM 23469 / PBi) (Borreliella bavariensis).